Here is a 120-residue protein sequence, read N- to C-terminus: uncharacterized protein (120 aa).

A signal peptide spans 1-19 (MKKIVCAVVALLLTLPAWA).

This is an uncharacterized protein from Salmonella typhimurium (strain LT2 / SGSC1412 / ATCC 700720).